The primary structure comprises 415 residues: Erythronolide mycarosyltransferase (415 aa).

Belongs to the glycosyltransferase 28 family.

It catalyses the reaction dTDP-beta-L-mycarose + erythronolide B = 3-O-alpha-L-mycarosylerythronolide B + dTDP + H(+). In terms of biological role, involved in the biosynthesis of the macrolide antibiotic erythromycin. Catalyzes the reversible transfer of mycarosyl from dTDP-beta-L-mycarose to erythronolide B to yield 3-alpha-L-mycarosylerythronolide B. It can also use TDP-beta-L-cladinose. In Saccharopolyspora erythraea (Streptomyces erythraeus), this protein is Erythronolide mycarosyltransferase.